Reading from the N-terminus, the 397-residue chain is Phosphonopyruvate decarboxylase (397 aa).

It belongs to the TPP enzyme family. Requires thiamine diphosphate as cofactor. The cofactor is Mg(2+).

It catalyses the reaction 3-phosphonopyruvate + H(+) = phosphonoacetaldehyde + CO2. It functions in the pathway secondary metabolite biosynthesis; bialaphos biosynthesis. Involved in the biosynthesis of phosphinothricin tripeptide (PTT), also known as bialaphos (BA), a natural-product antibiotic and potent herbicide. Catalyzes the decarboxylation of phosphonopyruvate (PnPy) to generate phosphonoacetaldehyde (PnAA). The sequence is that of Phosphonopyruvate decarboxylase from Streptomyces viridochromogenes (strain DSM 40736 / JCM 4977 / BCRC 1201 / Tue 494).